Consider the following 185-residue polypeptide: Elongation factor P (185 aa).

The protein belongs to the elongation factor P family.

Its subcellular location is the cytoplasm. Its pathway is protein biosynthesis; polypeptide chain elongation. Functionally, involved in peptide bond synthesis. Stimulates efficient translation and peptide-bond synthesis on native or reconstituted 70S ribosomes in vitro. Probably functions indirectly by altering the affinity of the ribosome for aminoacyl-tRNA, thus increasing their reactivity as acceptors for peptidyl transferase. This is Elongation factor P from Fervidobacterium nodosum (strain ATCC 35602 / DSM 5306 / Rt17-B1).